The following is a 345-amino-acid chain: Phosphate acyltransferase (345 aa).

It belongs to the PlsX family. As to quaternary structure, homodimer. Probably interacts with PlsY.

Its subcellular location is the cytoplasm. The enzyme catalyses a fatty acyl-[ACP] + phosphate = an acyl phosphate + holo-[ACP]. The protein operates within lipid metabolism; phospholipid metabolism. Catalyzes the reversible formation of acyl-phosphate (acyl-PO(4)) from acyl-[acyl-carrier-protein] (acyl-ACP). This enzyme utilizes acyl-ACP as fatty acyl donor, but not acyl-CoA. This is Phosphate acyltransferase from Wolbachia pipientis subsp. Culex pipiens (strain wPip).